The primary structure comprises 420 residues: Gamma-glutamyl phosphate reductase (420 aa).

The protein belongs to the gamma-glutamyl phosphate reductase family.

The protein resides in the cytoplasm. The catalysed reaction is L-glutamate 5-semialdehyde + phosphate + NADP(+) = L-glutamyl 5-phosphate + NADPH + H(+). The protein operates within amino-acid biosynthesis; L-proline biosynthesis; L-glutamate 5-semialdehyde from L-glutamate: step 2/2. In terms of biological role, catalyzes the NADPH-dependent reduction of L-glutamate 5-phosphate into L-glutamate 5-semialdehyde and phosphate. The product spontaneously undergoes cyclization to form 1-pyrroline-5-carboxylate. This is Gamma-glutamyl phosphate reductase from Streptococcus sanguinis (strain SK36).